The chain runs to 567 residues: Arginine--tRNA ligase (567 aa).

A 'HIGH' region motif is present at residues 128–138 (ANPTGPLHVGH).

The protein belongs to the class-I aminoacyl-tRNA synthetase family. In terms of assembly, monomer.

It is found in the cytoplasm. It carries out the reaction tRNA(Arg) + L-arginine + ATP = L-arginyl-tRNA(Arg) + AMP + diphosphate. This chain is Arginine--tRNA ligase, found in Acidovorax ebreus (strain TPSY) (Diaphorobacter sp. (strain TPSY)).